Here is an 876-residue protein sequence, read N- to C-terminus: uncharacterized protein (876 aa).

Positions 37-48 (DEDKSNNDDRRS) are enriched in basic and acidic residues. 4 disordered regions span residues 37–67 (DEDKSNNDDRRSLASILDSSSSVKKKGKGSN), 112–155 (DESG…RNIK), 226–254 (KKKSSEGATPTIKFNPPIEDGFTPLTKSQ), and 330–353 (MMMDDSRSVSSARRSRSRSRSRSI). Ser48 and Ser51 each carry phosphoserine. The span at 49 to 58 (LASILDSSSS) shows a compositional bias: low complexity. Residues 115-131 (GFTSDNNADYFSGNSYS) show a composition bias toward polar residues. Residues Ser360, Ser510, Ser552, and Ser577 each carry the phosphoserine modification. Residues 490 to 513 (PEVTKQKNTSGPKPGFSHSKSADA) are disordered. Disordered stretches follow at residues 661–728 (ITGG…RSPQ) and 750–876 (RHSL…FGRL). A compositionally biased stretch (basic residues) spans 689 to 699 (SKSKSRSSSKS). The segment covering 717–726 (SSASASRSRS) has biased composition (low complexity). Position 775 is a phosphoserine (Ser775). Low complexity-rich tracts occupy residues 794–808 (NKDSSLRKVSSSSSL) and 842–854 (FSFFKSKSRSPSS).

This is an uncharacterized protein from Saccharomyces cerevisiae (strain ATCC 204508 / S288c) (Baker's yeast).